A 326-amino-acid chain; its full sequence is MRSLVLLSSVLALVAPSKGAFTWLGTNEAGAEFGEGSYPGELGTEYIWPDLGTIGTLRNEGMNIFRVAFSMERLVPDSLAGPVADEYFQDLVETVNGITALGAYAVLDPHNYGRYYGNIITSTDDFAAFWTILATEFASNELVIFDTNNEYHTMDQSLVLNLNQAAIDAIRASGATSQYIFAEGNSWTGAWTWVDVNDNMKALTDPQDKLIYEMHQYLDSDGSGTNTACVSSTIGSERVTAATNWLRENGKLGVLGEFAGANNQVCKDAVADLLEYLEENSDVWLGALWWAAGPWWGDYMFNMEPTSGIAYQEYSEILQPYFVGSQ.

The N-terminal stretch at 1–19 (MRSLVLLSSVLALVAPSKG) is a signal peptide. The active-site Proton donor is E150. E257 (nucleophile) is an active-site residue.

Belongs to the glycosyl hydrolase 5 (cellulase A) family.

The protein localises to the secreted. It catalyses the reaction Endohydrolysis of (1-&gt;4)-beta-D-glucosidic linkages in cellulose, lichenin and cereal beta-D-glucans.. Functionally, has endoglucanase activity on substrates containing beta-1,4 glycosidic bonds, like in carboxymethylcellulose (CMC), hydroxyethylcellulose (HEC) and beta-glucan. Involved in the degradation of complex natural cellulosic substrates. The protein is Endo-beta-1,4-glucanase A (eglA) of Emericella nidulans (strain FGSC A4 / ATCC 38163 / CBS 112.46 / NRRL 194 / M139) (Aspergillus nidulans).